Consider the following 501-residue polypeptide: 2-phosphoxylose phosphatase 1 (501 aa).

At 1-6 (MLLRNR) the chain is on the cytoplasmic side. Residues 7–27 (FLLLLALAGLLAFLSLSLQFF) form a helical; Signal-anchor for type II membrane protein membrane-spanning segment. Over 28–501 (SRWLPVSLQL…YYDACHQRLF (474 aa)) the chain is Lumenal. The active-site Nucleophile is histidine 120. Residues asparagine 328 and asparagine 377 are each glycosylated (N-linked (GlcNAc...) asparagine). The active-site Proton donor is the aspartate 402. Asparagine 488 carries an N-linked (GlcNAc...) asparagine glycan.

Belongs to the histidine acid phosphatase family.

The protein localises to the golgi apparatus membrane. It catalyses the reaction 3-O-[beta-D-GlcA-(1-&gt;3)-beta-D-Gal-(1-&gt;3)-beta-D-Gal-(1-&gt;4)-beta-D-2-O-P-Xyl]-L-seryl-[protein] + H2O = 3-O-(beta-D-GlcA-(1-&gt;3)-beta-D-Gal-(1-&gt;3)-beta-D-Gal-(1-&gt;4)-beta-D-Xyl)-L-seryl-[protein] + phosphate. Responsible for the 2-O-dephosphorylation of xylose in the glycosaminoglycan-protein linkage region of proteoglycans thereby regulating the amount of mature glycosaminoglycan (GAG) chains. Sulfated glycosaminoglycans (GAGs), including heparan sulfate and chondroitin sulfate, are synthesized on the so-called common GAG-protein linkage region (GlcUAbeta1-3Galbeta1-3Galbeta1-4Xylbeta1-O-Ser) of core proteins, which is formed by the stepwise addition of monosaccharide residues by the respective specific glycosyltransferases. Xylose 2-O-dephosphorylation during completion of linkage region formation is a prerequisite for the initiation and efficient elongation of the repeating disaccharide region of GAG chains. The sequence is that of 2-phosphoxylose phosphatase 1 from Xenopus tropicalis (Western clawed frog).